The primary structure comprises 285 residues: Putative sugar uptake protein lmo0424 (285 aa).

9 helical membrane passes run 2 to 21 (SIYL…PIIA), 31 to 50 (QLLG…FWIL), 55 to 77 (TVLS…LLQF), 111 to 133 (WQTV…GVVM), 146 to 168 (SVSF…YVVT), 172 to 194 (FDVT…AIGI), 207 to 229 (VTFN…LATA), 233 to 255 (VATS…ILIF), and 262 to 284 (LEWT…LSLL).

The protein belongs to the GRP transporter (TC 2.A.7.5) family.

It localises to the cell membrane. This is Putative sugar uptake protein lmo0424 from Listeria monocytogenes serovar 1/2a (strain ATCC BAA-679 / EGD-e).